The sequence spans 173 residues: Ribosome maturation factor RimM (173 aa).

The 74-residue stretch at 97 to 170 (EHEYYYHEII…RIRVHIMEGL (74 aa)) folds into the PRC barrel domain.

It belongs to the RimM family. As to quaternary structure, binds ribosomal protein uS19.

The protein resides in the cytoplasm. Functionally, an accessory protein needed during the final step in the assembly of 30S ribosomal subunit, possibly for assembly of the head region. Essential for efficient processing of 16S rRNA. May be needed both before and after RbfA during the maturation of 16S rRNA. It has affinity for free ribosomal 30S subunits but not for 70S ribosomes. This Shouchella clausii (strain KSM-K16) (Alkalihalobacillus clausii) protein is Ribosome maturation factor RimM.